Consider the following 389-residue polypeptide: Globin-like protein 6 (389 aa).

The segment covering Met-1–Val-15 has biased composition (polar residues). 3 disordered regions span residues Met-1–Ser-38, Arg-96–Ser-123, and Thr-143–Pro-185. Positions Ser-16 to Ser-25 are enriched in basic residues. The Globin domain occupies His-196–Gln-347. Residues His-254 and His-286 each coordinate heme b. The interval Ser-367–Met-389 is disordered. Residues Lys-376 to Met-389 show a composition bias toward basic and acidic residues.

It belongs to the globin family. As to expression, expressed in the head and tail neurons and nerve cord.

Its function is as follows. May play a role as physiological sensor for oxygen via redox signaling and/or electron transport. This is Globin-like protein 6 from Caenorhabditis elegans.